Reading from the N-terminus, the 487-residue chain is MASFVKFANTTFLDARFPLFKNVSFELARKQNWAIIGNTGSGRTTFLRCIQGSFTPSPSTSFSYPFLKGKSDSPWQAIQLLDFKSSGQQRAAYYSERYHSFRDKEHDTTLEKWLLGAYRGNEKFASQHVQEAASMTQLSHLLPSSLINLSNGQSRRAMLASKLVQRPQLLLLDEPYAGLDVTSRSVLSSLLGEMSNHCSPKIVLSLRPQDKIPDFITHVLELKNKKITYQGPKEQYIPMTSHSTNIPVKPQMKKSKPITIGKPLISMEHLNCVYWGRKVLSDINWTIREGERWALTGSNGSGKTTLLAYVVGDHPKLFASNIKFFGKSIGPGTGISIFDIQENIGHCSPEIHNHFPKQHTCFEALLSAWSTTFTIPKLTETRLAAISSILEEFELKDIKDKPLSSISVGMQRFILFCRAIVKQPRLVVLDEPFQGVDTKYVHMAHNYLNEKLSPSQAMVIISHYEDELPACVNRRAHIDNGKLVIHA.

2 ABC transporter domains span residues 5–249 and 265–487; these read VKFA…IPVK and ISME…VIHA. Position 297–304 (297–304) interacts with ATP; that stretch reads GSNGSGKT.

It belongs to the ABC transporter superfamily.

It is found in the mitochondrion. This is an uncharacterized protein from Schizosaccharomyces pombe (strain 972 / ATCC 24843) (Fission yeast).